The chain runs to 1008 residues: DNA polymerase catalytic subunit (1008 aa).

It belongs to the DNA polymerase type-B family.

The protein localises to the host nucleus. It carries out the reaction DNA(n) + a 2'-deoxyribonucleoside 5'-triphosphate = DNA(n+1) + diphosphate. The sequence is that of DNA polymerase catalytic subunit (9) from Equine herpesvirus 2 (strain 86/87) (EHV-2).